We begin with the raw amino-acid sequence, 2332 residues long: MNTTDCFIALVQAIREIKALFLSRTTGKMELTLYNGEKKTFYSRPNNHDNCWLNAILQLFRYVEEPFFDWVYSSPENLTLEAIKQLEDLTGLELHEGGPPALVIWNIKHLLHTGIGTASRPSEVCMVDGTDMCLADFHAGIFLKGQEHAVFACVTSNGWYAIDDEDFYPWTPDPSDVLVFVPYDQEPLNGEWKAKVQRKLKGAGQSSPATGSQNQSGNTGSIINNYYMQQYQNSMDTQLGDNAISGGSNEGSTDTTSTHTTNTQNNDWFSKLASSAFSGLFGALLADKKTEETTLLEDRILTTRNGHTTSTTQSSVGVTYGYATAEDFVSGPNTSGLETRVVQAERFFKTHLFDWVTSDSFGRCHLLELPTDHKGVYGSLTDSYAYMRNGWDVEVTAVGNQFNGGCLLVAMVPELYSIQKRELYQLTLFPHQFINPRTNMTAHITVPFVGVNRYDQYKVHKPWTLVVMVVAPLTVNTEGAPQIKVYANIAPTNVHVAGEFPSKEGIFPVACSDGYGGLVTTDPKTADPVYGKVFNPPRNQLPGRFTNLLDVAEACPTFLRFEGGVPYVTTKTDSDRVLAQFDMSLAAKQMSNTFLAGLAQYYTQYSGTINLHFMFTGPTDAKARYMVAYAPPGMEPPKTPEAAAHCIHAEWDTGLNSKFTFSIPYLSAADYAYTASGVAETTNVQGWVCLFQITHGKADGDALVVLASAGKDFELRLPVDARAETTSAGESADPVTTTVENYGGETQIQRRQHTDVSFIMDRFVKVTPQNQINILDLMQIPSHTLVGALLRASTYYFSDLEIAVKHEGDLTWVPNGAPEKALDNTTNPTAYHKAPLTRLALPYTAPHRVLATVYNGECRYNRNAVPNLRGDLQVLAQKVARTLPTSFNYGAIKATRVTELLYRMKRAETYCPRPLLAIHPTEARHKQKIVAPVKQTLNFDLLKLAGDVESNPGPFFFSDVRSNFSKLVETINQMQEDMSTKHGPDFNRLVSAFEELAIGVKAIRTGLDEAKPWYKLIKLLSRLSCMAAVAARSKDPVLVAIMLADTGLEILDSTFVVKKISDSLSSLFHVPAPVFSFGAPVLLAGLVKVASSFFRSTPEDLERAEKQLKARDINDIFAILKNGEWLVKLILAIRDWIKAWIASEEKFVTMTDLVPGILEKQRDLNDPSKYKEAKEWLDNARQACLKSGNVHIANLCKVVAPAPSKSRPEPVVVCLRGKSGQGKSFLANVLAQAISTHFTGRIDSVWYCPPDPDHFDGYNQQTVVVMDDLGQNPDGKDFKYFAQMVSTTGFIPPMASLEDKGKPFNSKVIIATTNLYSGFTPRTMVCPDALNRRFHFDIDVSAKDGYKINSKLDIIKALEDTHANPVAMFQYDCALLNGMAVEMKRMQQDMFKPQPPLQNVYQLVQEVIDRVELHEKVSSHPIFKQISIPSQKSVLYFLIEKGQHEAAIEFFEGMVHDSIKEELRPLIQQTSFVKRAFKRLKENFEIVALCLTLLANIVIMIRETRKRQKMVDDAVNEYIEKANITTDDKTLDEAEKSPLETSGASTVGFRERTLPGQKACDDVNSEPAQPVEEQPQAEGPYAGPLERQKPLKVRAKLPQQEGPYAGPMERQKPLKVKAKAPVVKEGPYEGPVKKPVALKVKAKNLIVTESGAPPTDLQKMVMGNTKPVELILDGKTVAICCATGVFGTAYLVPRHLFAEKYDKIMVDGRAMTDSDYRVFEFEIKVKGQDMLSDAALMVLHRGNRVRDITKHFRDTARMKKGTPVVGVINNADVGRLIFSGEALTYKDIVVCMDGDTMPGLFAYRAATKAGYCGGAVLAKDGADTFIVGTHSAGGNGVGYCSCVSRSMLLKMKAHIDPEPHHEGLIVDTRDVEERVHVMRKTKLAPTVAHGVFNPEFGPAALSNKDPRLNEGVVLDEVIFSKHKGDTKMSEEDKALFRRCAADYASRLHSVLGTANAPLSIYEAIKGVDGLDAMEPDTAPGLPWALQGKRRGALIDFENGTVGPEVEAALKLMEKREYKFVCQTFLKDEIRPLEKVRAGKTRIVDVLPVEHILYTRMMIGRFCAQMHSNNGPQIGSAVGCNPDVDWQRFGTHFAQYRNVWDVDYSAFDANHCSDAMNIMFEEVFRTEFGFHPNAEWILKTLVNTEHAYENKRITVGGGMPSGCSATSIINTILNNIYVLYALRRHYEGVELDTYTMISYGDDIVVASDYDLDFEALKPHFKSLGQTITPADKSDKGFVLGHSITDVTFLKRHFHMDYGTGFYKPVMASKTLEAILSFARRGTIQEKLISVAGLAVHSGPDEYRRLFEPFQGLFEIPSYRSLYLRWVNAVCGDA.

The Peptidase C28 domain maps to 1–201 (MNTTDCFIAL…WKAKVQRKLK (201 aa)). The Cytoplasmic segment spans residues 1–1480 (MNTTDCFIAL…SFVKRAFKRL (1480 aa)). Catalysis depends on for leader protease activity residues Cys-51, His-148, and Asp-163. 2 disordered regions span residues 197 to 218 (QRKL…QSGN) and 238 to 265 (QLGD…NTQN). A lipid anchor (N-myristoyl glycine; by host) is attached at Gly-202. Composition is skewed to polar residues over residues 204-218 (GQSS…QSGN) and 238-251 (QLGD…SNEG). Residues 252–265 (STDTTSTHTTNTQN) show a composition bias toward low complexity. A disulfide bridge connects residues Cys-406 and Cys-858. Residues 788–796 (ALLRASTYY) are antigenic epitope. The Cell attachment site signature appears at 869–871 (RGD). Residues 1189-1353 (NVHIANLCKV…DGYKINSKLD (165 aa)) enclose the SF3 helicase domain. 1217-1224 (GKSGQGKS) contacts ATP. An intramembrane segment occupies 1481–1501 (KENFEIVALCLTLLANIVIMI). At 1502-2332 (RETRKRQKMV…RWVNAVCGDA (831 aa)) the chain is on the cytoplasmic side. Positions 1529-1538 (KTLDEAEKSP) are enriched in basic and acidic residues. Residues 1529 to 1584 (KTLDEAEKSPLETSGASTVGFRERTLPGQKACDDVNSEPAQPVEEQPQAEGPYAGP) are disordered. O-(5'-phospho-RNA)-tyrosine occurs at positions 1581, 1604, and 1628. One can recognise a Peptidase C3 domain in the interval 1652–1848 (APPTDLQKMV…YCSCVSRSML (197 aa)). His-1695 serves as the catalytic For protease 3C activity; Proton donor/acceptor. Residues Asp-1733 and Cys-1812 each act as for protease 3C activity in the active site. 2 short sequence motifs (nuclear localization signal) span residues 1878–1886 (MRKTKLAPT) and 1879–1886 (RKTKLAPT). Residues 2096-2214 (RNVWDVDYSA…ASDYDLDFEA (119 aa)) enclose the RdRp catalytic domain. Asp-2200 acts as the For RdRp activity in catalysis.

The protein belongs to the picornaviruses polyprotein family. As to quaternary structure, interacts with host ISG15. In terms of assembly, interacts (via R-G-D motif) with host ITGAV/ITGB6. Interacts with host MAVS; this interaction inhibits binding of host TRAF3 to MAVS, thereby suppressing interferon-mediated responses. Forms homooligomers. As to quaternary structure, homohexamer. Interacts with host VIM. Interacts with host BECN1. In terms of assembly, interacts with host DCTN3. Interacts with RNA-dependent RNA polymerase; this interaction allows 3B-1 to binds 2 polymerases and act as a primer. It also allows the recruitment of the RNA-dependent RNA polymerase to host membranes. As to quaternary structure, interacts with RNA-dependent RNA polymerase; this interaction allows 3B-2 to act as a primer. In terms of assembly, interacts with RNA-dependent RNA polymerase; this interaction allows 3B-3 to act as a primer. Interacts with 3B-1; this interaction allows 3B-1 to binds 2 polymerases and act as a primer. It also allows the recruitment of the RNA-dependent RNA polymerase to host membranes. Interacts with 3B-2; this interaction allows 3B-2 to act as a primer. Interacts with 3B-3; this interaction allows 3B-3 to act as a primer. Post-translationally, removes six residues from its own C-terminus, generating sLb(pro). In terms of processing, specific enzymatic cleavages in vivo by the viral proteases yield a variety of precursors and mature proteins. The polyprotein seems to be cotranslationally cleaved at the 2A/2B junction by a ribosomal skip from one codon to the next without formation of a peptide bond. This process would release the L-P1-2A peptide from the translational complex. During virion maturation, immature virions are rendered infectious following cleavage of VP0 into VP4 and VP2. This maturation seems to be an autocatalytic event triggered by the presence of RNA in the capsid and is followed by a conformational change of the particle. Post-translationally, myristoylation is required during RNA encapsidation and formation of the mature virus particle. In terms of processing, uridylylated by the polymerase and covalently linked to the 5'-end of genomic RNA. These uridylylated forms act as a nucleotide-peptide primer for the polymerase. The disulfide bond between VP1 and VP2 occurs after release of virus from the host cell.

The protein localises to the host nucleus. It localises to the host cytoplasm. It is found in the virion. Its subcellular location is the host endoplasmic reticulum membrane. The protein resides in the host cytoplasmic vesicle membrane. The catalysed reaction is Autocatalytically cleaves itself from the polyprotein of the foot-and-mouth disease virus by hydrolysis of a Lys-|-Gly bond, but then cleaves host cell initiation factor eIF-4G at bonds -Gly-|-Arg- and -Lys-|-Arg-.. It catalyses the reaction a ribonucleoside 5'-triphosphate + H2O = a ribonucleoside 5'-diphosphate + phosphate + H(+). The enzyme catalyses RNA(n) + a ribonucleoside 5'-triphosphate = RNA(n+1) + diphosphate. It carries out the reaction Selective cleavage of Gln-|-Gly bond in the poliovirus polyprotein. In other picornavirus reactions Glu may be substituted for Gln, and Ser or Thr for Gly.. Its function is as follows. Autocatalytically cleaves itself from the polyprotein at the L/VP0 junction. Also cleaves the host translation initiation factors EIF4G1 and EIF4G3, in order to shut off the capped cellular mRNA transcription. Plays a role in counteracting host innate antiviral response using diverse mechanisms. Possesses a deubiquitinase activity acting on both 'Lys-48' and 'Lys-63'-linked polyubiquitin chains. In turn, inhibits the ubiquitination and subsequent activation of key signaling molecules of type I IFN response such as host RIGI, TBK1, TRAF3 and TRAF6. Inhibits host NF-kappa-B activity by inducing a decrease in RELA mRNA levels. Cleaves a peptide bond in the C-terminus of host ISG15, resulting in the damaging of this modifier that can no longer be attached to target proteins. Also cleaves host G3BP1 and G3BP2 in order to inhibit cytoplasmic stress granules assembly. In terms of biological role, lies on the inner surface of the capsid shell. After binding to the host receptor, the capsid undergoes conformational changes. Capsid protein VP4 is released, capsid protein VP1 N-terminus is externalized, and together, they shape a pore in the host membrane through which the viral genome is translocated into the host cell cytoplasm. After genome has been released, the channel shrinks. Functionally, forms an icosahedral capsid of pseudo T=3 symmetry with capsid proteins VP1 and VP3. The capsid is composed of 60 copies of each capsid protein organized in the form of twelve pentamers and encloses the viral positive strand RNA genome. Upon acidifcation in the endosome, dissociates into pentamers. Forms an icosahedral capsid of pseudo T=3 symmetry with capsid proteins VP2 and VP3. The capsid is composed of 60 copies of each capsid protein organized in the form of twelve pentamers and encloses the viral positive strand RNA genome. Mediates cell entry by attachment to an integrin receptor, usually host ITGAV/ITGB6, via a conserved arginine-glycine-aspartic acid (R-G-D) motif. In addition, targets host MAVS to suppress type I IFN pathway. Upon acidifcation in the endosome, dissociates into pentamers. Its function is as follows. Forms an icosahedral capsid of pseudo T=3 symmetry with capsid proteins VP0 and VP3. The capsid is composed of 60 copies of each capsid protein organized in the form of twelve pentamers and encloses the viral positive strand RNA genome. Upon acidifcation in the endosome, dissociates into pentamers. In terms of biological role, mediates self-processing of the polyprotein by a translational effect termed 'ribosome skipping'. Mechanistically, 2A-mediated cleavage occurs between the C-terminal glycine and the proline of the downstream protein 2B. In the case of foot-and-mouth disease virus, the 2A oligopeptide is post-translationally 'trimmed' from the C-terminus of the upstream protein 1D by 3C proteinase. Functionally, plays an essential role in the virus replication cycle by acting as a viroporin. Creates a pore in the host endoplasmic reticulum and as a consequence releases Ca2+ in the cytoplasm of infected cell. In turn, high levels of cytoplasmic calcium may trigger membrane trafficking and transport of viral ER-associated proteins to viroplasms, sites of viral genome replication. Associates with and induces structural rearrangements of intracellular membranes. Triggers host autophagy by interacting with host BECN1 and thereby promotes viral replication. Participates in viral replication and interacts with host DHX9. Displays RNA-binding, nucleotide binding and NTPase activities. May play a role in virion morphogenesis and viral RNA encapsidation by interacting with the capsid protein VP3. Its function is as follows. Plays important roles in virus replication, virulence and host range. Cooperates with host DDX56 to inhibit IRF3 nuclear translocation and subsequent type I interferon production. In terms of biological role, covalently linked to the 5'-end of both the positive-strand and negative-strand genomic RNAs. Acts as a genome-linked replication primer. Functionally, cysteine protease that generates mature viral proteins from the precursor polyprotein. In addition to its proteolytic activity, binds to viral RNA and thus influences viral genome replication. RNA and substrate bind cooperatively to the protease. RNA-directed RNA polymerase 3D-POL replicates genomic and antigenomic RNA by recognizing replications specific signals. Covalently attaches UMP to a tyrosine of VPg, which is used to prime RNA synthesis. The positive stranded RNA genome is first replicated at virus induced membranous vesicles, creating a dsRNA genomic replication form. This dsRNA is then used as template to synthesize positive stranded RNA genomes. ss(+)RNA genomes are either translated, replicated or encapsidated. The polypeptide is Genome polyprotein (Bos taurus (Bovine)).